An 87-amino-acid polypeptide reads, in one-letter code: Diazepam-binding inhibitor-like 5 (87 aa).

Residues 2–87 (SQVEFEMACA…VEELKKNETC (86 aa)) form the ACB domain. An acyl-CoA-binding positions include 29–33 (YSFYK), lysine 55, and tyrosine 74.

The protein belongs to the ACBP family. As to expression, testis.

Its subcellular location is the cytoplasm. In terms of biological role, may be involved in the energy metabolism of the mature sperm. This Rattus norvegicus (Rat) protein is Diazepam-binding inhibitor-like 5 (Dbil5).